Consider the following 242-residue polypeptide: Small ribosomal subunit protein uS2 (242 aa).

It belongs to the universal ribosomal protein uS2 family.

The chain is Small ribosomal subunit protein uS2 from Vibrio campbellii (strain ATCC BAA-1116).